The primary structure comprises 211 residues: Endonuclease V (211 aa).

2 residues coordinate Mg(2+): Asp31 and Glu95. Residues 182-211 form a disordered region; that stretch reads IYEVKNTPSPNRSRKKRGNRGKDNNNSQGN.

This sequence belongs to the endonuclease V family. The cofactor is Mg(2+).

Its subcellular location is the cytoplasm. It catalyses the reaction Endonucleolytic cleavage at apurinic or apyrimidinic sites to products with a 5'-phosphate.. Its function is as follows. DNA repair enzyme involved in the repair of deaminated bases. Selectively cleaves double-stranded DNA at the second phosphodiester bond 3' to a deoxyinosine leaving behind the intact lesion on the nicked DNA. This is Endonuclease V from Pyrococcus horikoshii (strain ATCC 700860 / DSM 12428 / JCM 9974 / NBRC 100139 / OT-3).